The chain runs to 377 residues: MSNGIVIIGSGFAARQLVKNIRKQDATIPLTLIAADSMDEYNKPDLSHVISQGQRADDLTRQTAGEFAEQFNLHLFPQTWVTDIDAEARVVKSQNNQWQYDKLVLATGASAFVPPVPGRELMLTLNSQQEYRACETQLRDARRVLIVGGGLIGSELAMDFCRAGKAVTLIDNAASILASLMPPEVSSRLQHRLTEMGVYLLLKSQLQGLEKTDSGILATLDHQRSIEVDAVIAATGLRPETALARRAGLTINRGVCVDSYLQTSNDDIYALGDYAEINGQVLPFLQPIQLSAMVLAKNLLGNNTPLKLPTMLVKIKTPELPLHLAGETQRQDLRWQINTERQGMVARGVDDADQLRAFVVSEDRMKEAFGLLKTLPM.

This sequence belongs to the FAD-dependent oxidoreductase family. The cofactor is FAD.

Its subcellular location is the cytoplasm. It catalyses the reaction 2 reduced [nitric oxide reductase rubredoxin domain] + NAD(+) + H(+) = 2 oxidized [nitric oxide reductase rubredoxin domain] + NADH. Its pathway is nitrogen metabolism; nitric oxide reduction. Functionally, one of at least two accessory proteins for anaerobic nitric oxide (NO) reductase. Reduces the rubredoxin moiety of NO reductase. This is Nitric oxide reductase FlRd-NAD(+) reductase (norW) from Shigella boydii serotype 4 (strain Sb227).